Consider the following 231-residue polypeptide: Large ribosomal subunit protein uL1 (231 aa).

This sequence belongs to the universal ribosomal protein uL1 family. As to quaternary structure, part of the 50S ribosomal subunit.

Binds directly to 23S rRNA. The L1 stalk is quite mobile in the ribosome, and is involved in E site tRNA release. In terms of biological role, protein L1 is also a translational repressor protein, it controls the translation of the L11 operon by binding to its mRNA. The chain is Large ribosomal subunit protein uL1 from Neisseria gonorrhoeae (strain ATCC 700825 / FA 1090).